The sequence spans 345 residues: Opioid-binding protein/cell adhesion molecule (345 aa).

The first 27 residues, 1–27 (MGVCGSLFQPWKCLVVVSLRLLFLVPT), serve as a signal peptide directing secretion. 3 consecutive Ig-like C2-type domains span residues 39 to 126 (PKAM…PKTS), 136 to 219 (PQIM…VKIT), and 223 to 310 (PPYI…ASIT). Residues Asn-44, Asn-70, and Asn-140 are each glycosylated (N-linked (GlcNAc...) asparagine). Residues Cys-57 and Cys-115 are joined by a disulfide bond. 2 disulfides stabilise this stretch: Cys-157-Cys-202 and Cys-244-Cys-296. Residues Asn-285, Asn-293, and Asn-306 are each glycosylated (N-linked (GlcNAc...) asparagine). Asn-322 carries GPI-anchor amidated asparagine lipidation. Residues 323-345 (SASRALACLWLSGTLFAHFFIKF) constitute a propeptide, removed in mature form.

It belongs to the immunoglobulin superfamily. IgLON family.

It is found in the cell membrane. Its function is as follows. Binds opioids in the presence of acidic lipids; probably involved in cell contact. This Bos taurus (Bovine) protein is Opioid-binding protein/cell adhesion molecule (OPCML).